The following is a 134-amino-acid chain: UPF0412 protein YaaI (134 aa).

A signal peptide spans 1–23 (MRSVLTISASLLFGLALSSVAHA).

The protein belongs to the UPF0412 family.

This chain is UPF0412 protein YaaI, found in Salmonella paratyphi B (strain ATCC BAA-1250 / SPB7).